The sequence spans 548 residues: Ran-binding protein 9 (548 aa).

Residues M1–S23 form a disordered region. In terms of domain architecture, B30.2/SPRY spans S2–F189. The LisH domain occupies W217–V249. In terms of domain architecture, CTLH spans S255 to V312.

It belongs to the RANBP9/10 family. As to quaternary structure, identified in the CTLH complex that contains at least MAEA, RMND5A (or alternatively its paralog RMND5B), GID8, WDR26, and RANBP9 and/or RANBP10.

The protein localises to the cytoplasm. The protein resides in the cell membrane. It is found in the nucleus. May act as scaffolding protein, and as adapter protein to couple membrane receptors to intracellular signaling pathways. Acts as a mediator of cell spreading and actin cytoskeleton rearrangement. Core component of the CTLH E3 ubiquitin-protein ligase complex that mediates ubiquitination and subsequent proteasomal degradation of target proteins. In Xenopus laevis (African clawed frog), this protein is Ran-binding protein 9 (ranbp9).